The following is a 347-amino-acid chain: GTP 3',8-cyclase (347 aa).

A Radical SAM core domain is found at 10 to 242 (RLNRPIGVLR…ERINARWPLE (233 aa)). R19 contributes to the GTP binding site. [4Fe-4S] cluster is bound by residues C26 and C30. Y32 contributes to the S-adenosyl-L-methionine binding site. C33 contributes to the [4Fe-4S] cluster binding site. R65 is a binding site for GTP. Position 69 (G69) interacts with S-adenosyl-L-methionine. Residue T104 participates in GTP binding. S129 lines the S-adenosyl-L-methionine pocket. Residue K178 coordinates GTP. M212 is a binding site for S-adenosyl-L-methionine. Residues C275 and C278 each coordinate [4Fe-4S] cluster. 280 to 282 (RLR) contributes to the GTP binding site. C292 lines the [4Fe-4S] cluster pocket.

The protein belongs to the radical SAM superfamily. MoaA family. Monomer and homodimer. The cofactor is [4Fe-4S] cluster.

It carries out the reaction GTP + AH2 + S-adenosyl-L-methionine = (8S)-3',8-cyclo-7,8-dihydroguanosine 5'-triphosphate + 5'-deoxyadenosine + L-methionine + A + H(+). It functions in the pathway cofactor biosynthesis; molybdopterin biosynthesis. Its function is as follows. Catalyzes the cyclization of GTP to (8S)-3',8-cyclo-7,8-dihydroguanosine 5'-triphosphate. In Synechococcus sp. (strain CC9605), this protein is GTP 3',8-cyclase.